Consider the following 286-residue polypeptide: uncharacterized protein (286 aa).

The next 6 membrane-spanning stretches (helical) occupy residues 52–74, 79–101, 142–161, 168–190, 203–225, and 257–276; these read ILWT…LIGL, LIAI…FLFL, WWDP…VSFF, VLVF…GAIL, IQAT…VALV, and IIWI…ASFM.

It localises to the cell membrane. This is an uncharacterized protein from Archaeoglobus fulgidus (strain ATCC 49558 / DSM 4304 / JCM 9628 / NBRC 100126 / VC-16).